The chain runs to 311 residues: R2-like ligand binding oxidase (311 aa).

Glutamate 68, glutamate 101, and histidine 104 together coordinate Mn(2+). A cross-link (3-(O4'-tyrosyl)-valine (Val-Tyr)) is located at residues 71 to 162 (VTQDIQPFMA…AAQVRASVTY (92 aa)). Fe cation is bound at residue glutamate 101. Residues glutamate 167, glutamate 202, and histidine 205 each coordinate Fe cation.

Belongs to the ribonucleoside diphosphate reductase small chain family. R2-like ligand binding oxidase subfamily. Homodimer. Requires Fe cation as cofactor. The cofactor is Mn(2+).

In terms of biological role, probable oxidase that might be involved in lipid metabolism. The chain is R2-like ligand binding oxidase from Mycobacterium avium (strain 104).